The primary structure comprises 544 residues: Thermosome subunit (544 aa).

It belongs to the TCP-1 chaperonin family. As to quaternary structure, forms an oligomeric complex of eight-membered rings.

Molecular chaperone; binds unfolded polypeptides in vitro, and has a weak ATPase activity. This is Thermosome subunit (ths) from Methanothermococcus thermolithotrophicus (Methanococcus thermolithotrophicus).